The following is an 84-amino-acid chain: Large ribosomal subunit protein bL27 (84 aa).

Positions 1–22 (MAHKKGASSTRNGRDSNAQRLG) are disordered. Residues 7-19 (ASSTRNGRDSNAQ) are compositionally biased toward polar residues.

Belongs to the bacterial ribosomal protein bL27 family.

The chain is Large ribosomal subunit protein bL27 from Streptomyces coelicolor (strain ATCC BAA-471 / A3(2) / M145).